Reading from the N-terminus, the 258-residue chain is Type III pantothenate kinase (258 aa).

9–16 (DIGNTSVN) provides a ligand contact to ATP. A substrate-binding site is contributed by 110–113 (GADR). The Proton acceptor role is filled by D112. D132 contacts K(+). T135 lines the ATP pocket. Residue T187 participates in substrate binding.

Belongs to the type III pantothenate kinase family. Homodimer. NH4(+) serves as cofactor. The cofactor is K(+).

It is found in the cytoplasm. The catalysed reaction is (R)-pantothenate + ATP = (R)-4'-phosphopantothenate + ADP + H(+). Its pathway is cofactor biosynthesis; coenzyme A biosynthesis; CoA from (R)-pantothenate: step 1/5. In terms of biological role, catalyzes the phosphorylation of pantothenate (Pan), the first step in CoA biosynthesis. The protein is Type III pantothenate kinase of Dehalococcoides mccartyi (strain ATCC BAA-2266 / KCTC 15142 / 195) (Dehalococcoides ethenogenes (strain 195)).